The primary structure comprises 203 residues: Ribonuclease HII (203 aa).

The 188-residue stretch at 16-203 folds into the RNase H type-2 domain; sequence ENIACCDEVG…HRKSFLNKIL (188 aa). A divalent metal cation-binding residues include Asp22, Glu23, and Asp120.

Belongs to the RNase HII family. It depends on Mn(2+) as a cofactor. Requires Mg(2+) as cofactor.

It is found in the cytoplasm. It carries out the reaction Endonucleolytic cleavage to 5'-phosphomonoester.. Endonuclease that specifically degrades the RNA of RNA-DNA hybrids. This is Ribonuclease HII from Alkaliphilus oremlandii (strain OhILAs) (Clostridium oremlandii (strain OhILAs)).